The primary structure comprises 131 residues: Protein Bouncer (131 aa).

The signal sequence occupies residues 1 to 26 (MGSLRTRQLFHAALLWLCLPLPLLLC). 4 disulfides stabilise this stretch: cysteine 31–cysteine 56, cysteine 50–cysteine 74, cysteine 80–cysteine 99, and cysteine 100–cysteine 105. Residues 31–106 (CYYSPVLEKE…YSCCDWPYCN (76 aa)) enclose the UPAR/Ly6 domain. Asparagine 65 carries an N-linked (GlcNAc...) asparagine glycan. Asparagine 106 carries the GPI-anchor amidated asparagine lipid modification. Residues 107–131 (RAVALEPLTAMLVAAAVVACSFCLT) constitute a propeptide, removed in mature form.

The protein belongs to the SPACA4/bouncer family. As to quaternary structure, interacts with spermatocyte complex composed of izumo1, spaca6 and tmem81. In terms of tissue distribution, expressed in oocytes. Not expressed in testis.

It is found in the cell membrane. In terms of biological role, oocyte-expressed fertilization factor that mediates sperm-egg binding and is essential for sperm entry into the egg. Necessary and sufficient to mediate species-specific gamete recognition and fertilization, which is essential for vertebrate species performing external fertilization. External fertilization cannot guarantee that only conspecific sperm reaches the egg by precopulatory mate choice: proteins such as Bouncer can therefore support the selection of conspecific sperm. This chain is Protein Bouncer, found in Oryzias latipes (Japanese rice fish).